The primary structure comprises 250 residues: 3alpha-hydroxysteroid dehydrogenase (250 aa).

Residues N93, Y158, and K162 each contribute to the NADP(+) site. Y158 serves as the catalytic Proton acceptor.

Belongs to the short-chain dehydrogenases/reductases (SDR) family.

It catalyses the reaction lithocholate + NADP(+) = 3-oxo-5beta-cholan-24-oate + NADPH + H(+). The enzyme catalyses deoxycholate + NADP(+) = 12alpha-hydroxy-3-oxo-5beta-cholan-24-oate + NADPH + H(+). It carries out the reaction deoxycholate + NAD(+) = 12alpha-hydroxy-3-oxo-5beta-cholan-24-oate + NADH + H(+). The catalysed reaction is cholate + NADP(+) = 7alpha,12alpha-dihydroxy-3-oxo-5beta-cholan-24-oate + NADPH + H(+). It catalyses the reaction chenodeoxycholate + NADP(+) = 3-oxochenodeoxycholate + NADPH + H(+). In terms of biological role, involved in the modification of secondary bile acids into iso-bile acids (3beta-bile acids) via epimerization of the 3-OH group through a 3-oxo-intermediate. Catalyzes the oxidation of deoxycholate (DCA) and lithocholate (LCA) to yield 12-alpha-hydroxy-3-oxo-5-beta-cholan-24-oate (3-oxo-DCA) and 3-oxo-5-beta-cholan-24-oate (3-oxo-LCA), respectively. Is also able to catalyze the oxidation of cholate (CA) and chenodeoxycholate (CDCA) into 3-dehydrocholate (3-oxo-CA) and 7-alpha-hydroxy-3-oxo-5-beta-cholan-24-oate (3-oxo-CDCA), respectively. Can also catalyze the reverse reactions in vitro. Accepts both NADPH and NADH as cosubstrates. The conversion of the abundant bile acid DCA into isoDCA by the gut bacterium R.gnavus favors the growth of the keystone commensal genus Bacteroides, since isoDCA is less cytotoxic than its parent compound, DCA; iso-bile acids have thus a potential role in modulating gut community composition. The chain is 3alpha-hydroxysteroid dehydrogenase from Mediterraneibacter gnavus (strain ATCC 29149 / DSM 114966 / JCM 6515 / VPI C7-9) (Ruminococcus gnavus).